Reading from the N-terminus, the 428-residue chain is CRISPR system endoribonuclease Csm6 (428 aa).

A CARF domain region spans residues 1–145 (MKILISAVGT…RANREYTALT (145 aa)). An HEPN domain region spans residues 146 to 428 (ESEIDALIME…QNKELIKMLE (283 aa)).

It belongs to the CRISPR-associated Csm6 family. In terms of assembly, homodimer. The composite ssRNase active site is formed at the dimer interface.

Non-specific ssRNase activity is allosterically activated about 1000-fold by cyclic hexaadenylate (cA6), a second messenger produced by Cas10 of the ternary Csm effector complex in the presence of a cognate target RNA. ssRNase activity is inhibited by physiological concentrations of ATP (1 mM), activity is restored by cOA. Its function is as follows. CRISPR (clustered regularly interspaced short palindromic repeat) is an adaptive immune system that provides protection against mobile genetic elements (viruses, transposable elements and conjugative plasmids). CRISPR clusters contain spacers, sequences complementary to antecedent mobile elements, and target invading nucleic acids. CRISPR clusters are transcribed and processed into CRISPR RNA (crRNA). The type III-A Csm complex binds crRNA and acts as a crRNA-guided RNase, DNase and cyclic oligoadenylate synthase; binding of target RNA cognate to the crRNA is required for all activities. In a heterologous host this Csm effector complex restricts ssRNA phage MS2, suggesting it may target RNA viruses in vivo. This protein is not part of the Csm complex. In terms of biological role, csm functions as a non-specific ssDNase. Base-pairing between crRNA and target RNA to form a ternary Csm complex activates a ssDNase activity; target RNA cleavage suppresses the ssDNase, a temporal control that prevents uncontrolled DNA degradation. Viral RNA transcripts probably tether the Csm complex to the viral genome, recruiting Cas10 ssDNA activity which is able to degrade DNA in the transcription bubble, spatially controlling the DNase activity. Functionally, a single-strand-specific endoribonuclease (ssRNase) that is approximately 1000-fold stimulated by cyclic oligoadenylate (cOA); although several species of cOA are synthesized by this organism only cyclic hexaadenylate (cA6) stimulates the ssRNase activity. Cleaves preferentially within GA or AA dinucleotides, although the presence of cA6 broadens the preference. Linear oligoadenylates do not activate the RNase. The chain is CRISPR system endoribonuclease Csm6 from Streptococcus thermophilus.